The chain runs to 179 residues: ATP synthase subunit b (179 aa).

A helical transmembrane segment spans residues 29–48 (VINLAILIGVLVYFGRGVLG).

The protein belongs to the ATPase B chain family. F-type ATPases have 2 components, F(1) - the catalytic core - and F(0) - the membrane proton channel. F(1) has five subunits: alpha(3), beta(3), gamma(1), delta(1), epsilon(1). F(0) has four main subunits: a(1), b(1), b'(1) and c(10-14). The alpha and beta chains form an alternating ring which encloses part of the gamma chain. F(1) is attached to F(0) by a central stalk formed by the gamma and epsilon chains, while a peripheral stalk is formed by the delta, b and b' chains.

The protein resides in the cellular thylakoid membrane. Its function is as follows. F(1)F(0) ATP synthase produces ATP from ADP in the presence of a proton or sodium gradient. F-type ATPases consist of two structural domains, F(1) containing the extramembraneous catalytic core and F(0) containing the membrane proton channel, linked together by a central stalk and a peripheral stalk. During catalysis, ATP synthesis in the catalytic domain of F(1) is coupled via a rotary mechanism of the central stalk subunits to proton translocation. Component of the F(0) channel, it forms part of the peripheral stalk, linking F(1) to F(0). Functionally, the complex from the organism is particularly stable to disruption and remains functional after 6 hrs at 55 degrees Celsius. This chain is ATP synthase subunit b, found in Thermosynechococcus vestitus (strain NIES-2133 / IAM M-273 / BP-1).